Reading from the N-terminus, the 497-residue chain is Glycerol kinase (497 aa).

Thr11 contributes to the ADP binding site. ATP is bound by residues Thr11, Ser12, and Ser13. Thr11 serves as a coordination point for sn-glycerol 3-phosphate. An ADP-binding site is contributed by Arg15. Arg81, Glu82, Tyr133, and Asp242 together coordinate sn-glycerol 3-phosphate. Glycerol is bound by residues Arg81, Glu82, Tyr133, Asp242, and Gln243. ADP-binding residues include Thr264 and Gly307. Residues Thr264, Gly307, Gln311, and Gly412 each coordinate ATP. ADP is bound by residues Gly412 and Asn416.

The protein belongs to the FGGY kinase family.

It catalyses the reaction glycerol + ATP = sn-glycerol 3-phosphate + ADP + H(+). It participates in polyol metabolism; glycerol degradation via glycerol kinase pathway; sn-glycerol 3-phosphate from glycerol: step 1/1. Inhibited by fructose 1,6-bisphosphate (FBP). In terms of biological role, key enzyme in the regulation of glycerol uptake and metabolism. Catalyzes the phosphorylation of glycerol to yield sn-glycerol 3-phosphate. The polypeptide is Glycerol kinase (Polaromonas naphthalenivorans (strain CJ2)).